The sequence spans 406 residues: CCA-adding enzyme (406 aa).

Positions 32 and 35 each coordinate ATP. Residues Gly-32 and Arg-35 each coordinate CTP. Residues Asp-45 and Asp-47 each contribute to the Mg(2+) site. Residues Arg-116, Asp-159, Arg-162, Arg-165, and Arg-168 each coordinate ATP. CTP-binding residues include Arg-116, Asp-159, Arg-162, Arg-165, and Arg-168.

The protein belongs to the tRNA nucleotidyltransferase/poly(A) polymerase family. Bacterial CCA-adding enzyme type 3 subfamily. In terms of assembly, homodimer. Mg(2+) is required as a cofactor.

The enzyme catalyses a tRNA precursor + 2 CTP + ATP = a tRNA with a 3' CCA end + 3 diphosphate. It carries out the reaction a tRNA with a 3' CCA end + 2 CTP + ATP = a tRNA with a 3' CCACCA end + 3 diphosphate. In terms of biological role, catalyzes the addition and repair of the essential 3'-terminal CCA sequence in tRNAs without using a nucleic acid template. Adds these three nucleotides in the order of C, C, and A to the tRNA nucleotide-73, using CTP and ATP as substrates and producing inorganic pyrophosphate. tRNA 3'-terminal CCA addition is required both for tRNA processing and repair. Also involved in tRNA surveillance by mediating tandem CCA addition to generate a CCACCA at the 3' terminus of unstable tRNAs. While stable tRNAs receive only 3'-terminal CCA, unstable tRNAs are marked with CCACCA and rapidly degraded. The sequence is that of CCA-adding enzyme from Enterococcus faecalis (strain ATCC 700802 / V583).